Reading from the N-terminus, the 1241-residue chain is ATP-dependent helicase/nuclease subunit A (1241 aa).

Positions 12–485 (SQWTDDQWKA…IDLAKNFRSR (474 aa)) constitute a UvrD-like helicase ATP-binding domain. Position 33-40 (33-40 (AAAGSGKT)) interacts with ATP. One can recognise a UvrD-like helicase C-terminal domain in the interval 505 to 805 (GEIDYDADAE…RIMTIHKSKG (301 aa)).

The protein belongs to the helicase family. AddA subfamily. As to quaternary structure, heterodimer of AddA and AddB/RexB. The cofactor is Mg(2+).

It carries out the reaction Couples ATP hydrolysis with the unwinding of duplex DNA by translocating in the 3'-5' direction.. The catalysed reaction is ATP + H2O = ADP + phosphate + H(+). Functionally, the heterodimer acts as both an ATP-dependent DNA helicase and an ATP-dependent, dual-direction single-stranded exonuclease. Recognizes the chi site generating a DNA molecule suitable for the initiation of homologous recombination. The AddA nuclease domain is required for chi fragment generation; this subunit has the helicase and 3' -&gt; 5' nuclease activities. The polypeptide is ATP-dependent helicase/nuclease subunit A (Bacillus thuringiensis (strain Al Hakam)).